The primary structure comprises 241 residues: Protocatechuate 3,4-dioxygenase beta chain (241 aa).

Fe cation contacts are provided by Tyr-109, Tyr-148, His-161, and His-163.

The protein belongs to the intradiol ring-cleavage dioxygenase family. In terms of assembly, the enzyme is an oligomer of 12 copies of the alpha and beta chains. Requires Fe(3+) as cofactor.

The catalysed reaction is 3,4-dihydroxybenzoate + O2 = 3-carboxy-cis,cis-muconate + 2 H(+). Its pathway is aromatic compound metabolism; beta-ketoadipate pathway; 3-carboxy-cis,cis-muconate from 3,4-dihydroxybenzoate: step 1/1. Its function is as follows. Plays an essential role in the utilization of numerous aromatic and hydroaromatic compounds via the beta-ketoadipate pathway. The chain is Protocatechuate 3,4-dioxygenase beta chain (pcaH) from Acinetobacter baylyi (strain ATCC 33305 / BD413 / ADP1).